The following is a 704-amino-acid chain: Elongation factor G (704 aa).

Positions 8–291 (DKVRNIGIMA…AVVEYLASPV (284 aa)) constitute a tr-type G domain. GTP-binding positions include 17–24 (AHIDAGKT), 90–94 (DTPGH), and 144–147 (NKMD).

Belongs to the TRAFAC class translation factor GTPase superfamily. Classic translation factor GTPase family. EF-G/EF-2 subfamily.

It is found in the cytoplasm. Its function is as follows. Catalyzes the GTP-dependent ribosomal translocation step during translation elongation. During this step, the ribosome changes from the pre-translocational (PRE) to the post-translocational (POST) state as the newly formed A-site-bound peptidyl-tRNA and P-site-bound deacylated tRNA move to the P and E sites, respectively. Catalyzes the coordinated movement of the two tRNA molecules, the mRNA and conformational changes in the ribosome. The sequence is that of Elongation factor G from Chlorobium limicola (strain DSM 245 / NBRC 103803 / 6330).